We begin with the raw amino-acid sequence, 372 residues long: Tyrosine--tRNA ligase 1 (372 aa).

Residues tyrosine 37, tyrosine 169, glutamine 173, aspartate 176, and glutamine 191 each coordinate L-tyrosine. The 'KMSKS' region motif lies at 246-250; that stretch reads KMSKS. Lysine 249 contacts ATP.

Belongs to the class-I aminoacyl-tRNA synthetase family. TyrS type 4 subfamily. Homodimer.

It localises to the cytoplasm. It catalyses the reaction tRNA(Tyr) + L-tyrosine + ATP = L-tyrosyl-tRNA(Tyr) + AMP + diphosphate + H(+). Its function is as follows. Catalyzes the attachment of tyrosine to tRNA(Tyr) in a two-step reaction: tyrosine is first activated by ATP to form Tyr-AMP and then transferred to the acceptor end of tRNA(Tyr). The chain is Tyrosine--tRNA ligase 1 from Pyrobaculum aerophilum (strain ATCC 51768 / DSM 7523 / JCM 9630 / CIP 104966 / NBRC 100827 / IM2).